Consider the following 327-residue polypeptide: Phenylalanine--tRNA ligase alpha subunit (327 aa).

Glu252 is a binding site for Mg(2+).

The protein belongs to the class-II aminoacyl-tRNA synthetase family. Phe-tRNA synthetase alpha subunit type 1 subfamily. Tetramer of two alpha and two beta subunits. Mg(2+) is required as a cofactor.

It is found in the cytoplasm. The enzyme catalyses tRNA(Phe) + L-phenylalanine + ATP = L-phenylalanyl-tRNA(Phe) + AMP + diphosphate + H(+). This Salmonella newport (strain SL254) protein is Phenylalanine--tRNA ligase alpha subunit.